The sequence spans 328 residues: tRNA uridine(34) hydroxylase (328 aa).

Residues 130 to 224 (LDKDTVVLDT…YGKDPEVQGE (95 aa)) enclose the Rhodanese domain. Cys-184 serves as the catalytic Cysteine persulfide intermediate.

This sequence belongs to the TrhO family.

The enzyme catalyses uridine(34) in tRNA + AH2 + O2 = 5-hydroxyuridine(34) in tRNA + A + H2O. Its function is as follows. Catalyzes oxygen-dependent 5-hydroxyuridine (ho5U) modification at position 34 in tRNAs. The protein is tRNA uridine(34) hydroxylase of Streptococcus pneumoniae (strain ATCC 700669 / Spain 23F-1).